The following is an 87-amino-acid chain: Toxin CsEv3 (87 aa).

The N-terminal stretch at 1–19 (MNSLLMITACLFLIGTVWA) is a signal peptide. The LCN-type CS-alpha/beta domain occupies 20-85 (KEGYLVNKST…TYPLPNKSCG (66 aa)). 4 disulfides stabilise this stretch: Cys-31–Cys-84, Cys-35–Cys-60, Cys-44–Cys-65, and Cys-48–Cys-67. Cys-84 is subject to Cysteine amide.

It belongs to the long (4 C-C) scorpion toxin superfamily. Sodium channel inhibitor family. Beta subfamily. In terms of tissue distribution, expressed by the venom gland.

The protein resides in the secreted. Beta toxins bind voltage-independently at site-4 of sodium channels (Nav) and shift the voltage of activation toward more negative potentials thereby affecting sodium channel activation and promoting spontaneous and repetitive firing. Induces immediate paralysis in crickets after injection, with a total paralysis occurring within 15-30 minutes and lasting for 1-2 hours. Is also lethal to vertebrate (chicks) when injected in very high dosages (more that 100 mg/kg). The chain is Toxin CsEv3 from Centruroides sculpturatus (Arizona bark scorpion).